The following is a 414-amino-acid chain: 26S proteasome regulatory subunit 6B homolog (414 aa).

Residues 1 to 33 (MAATMVLDPKPSSTPPPTLPNPYTTDSQSTDSE) are disordered. Positions 21–30 (NPYTTDSQST) are enriched in low complexity. Positions 55-81 (EYVKDELKNLKREQLRSQEEVKRIQSV) form a coiled coil. 202–209 (GPPGTGKT) is an ATP binding site.

Belongs to the AAA ATPase family.

The protein resides in the cytoplasm. Its subcellular location is the nucleus. The 26S proteasome is involved in the ATP-dependent degradation of ubiquitinated proteins. The regulatory (or ATPase) complex confers ATP dependency and substrate specificity to the 26S complex. The polypeptide is 26S proteasome regulatory subunit 6B homolog (Helianthus annuus (Common sunflower)).